A 115-amino-acid chain; its full sequence is MAMTLRDIINKLLRRQPASASTARERLQLVLAHDRSDLSTELLDQMRKEILEVVAKYVEIDVDEGAVSLETEDRMTALVANLPIKRTITGQIQLKEPKNQSELDSPETEGTDQKS.

The tract at residues 93-115 is disordered; the sequence is QLKEPKNQSELDSPETEGTDQKS. The segment covering 104 to 115 has biased composition (acidic residues); it reads DSPETEGTDQKS.

The protein belongs to the MinE family.

Prevents the cell division inhibition by proteins MinC and MinD at internal division sites while permitting inhibition at polar sites. This ensures cell division at the proper site by restricting the formation of a division septum at the midpoint of the long axis of the cell. The protein is Cell division topological specificity factor of Prochlorococcus marinus (strain NATL1A).